The chain runs to 340 residues: Acidic endochitinase WIN6 (340 aa).

The N-terminal stretch at Met1 to Ala22 is a signal peptide. One can recognise a Chitin-binding type-1 domain in the interval Glu23–Gly63. 4 disulfide bridges follow: Cys25/Cys40, Cys34/Cys46, Cys39/Cys53, and Cys57/Cys61. The tract at residues Gly64–Asp85 is spacer. The tract at residues Asp86–Met340 is chitinase. 3 cysteine pairs are disulfide-bonded: Cys110–Cys172, Cys183–Cys191, and Cys290–Cys323. Glu154 functions as the Proton donor in the catalytic mechanism.

This sequence belongs to the glycosyl hydrolase 19 family. Chitinase class I subfamily.

It carries out the reaction Random endo-hydrolysis of N-acetyl-beta-D-glucosaminide (1-&gt;4)-beta-linkages in chitin and chitodextrins.. Functionally, defense against chitin-containing fungal pathogens. This chain is Acidic endochitinase WIN6 (WIN6), found in Populus trichocarpa (Western balsam poplar).